Here is a 245-residue protein sequence, read N- to C-terminus: Orotidine 5'-phosphate decarboxylase (245 aa).

Residues aspartate 22, lysine 44, 71 to 80 (DLKFHDIPNT), threonine 131, arginine 192, glutamine 201, glycine 221, and arginine 222 contribute to the substrate site. Catalysis depends on lysine 73, which acts as the Proton donor.

Belongs to the OMP decarboxylase family. Type 1 subfamily. In terms of assembly, homodimer.

It catalyses the reaction orotidine 5'-phosphate + H(+) = UMP + CO2. It functions in the pathway pyrimidine metabolism; UMP biosynthesis via de novo pathway; UMP from orotate: step 2/2. Catalyzes the decarboxylation of orotidine 5'-monophosphate (OMP) to uridine 5'-monophosphate (UMP). The chain is Orotidine 5'-phosphate decarboxylase from Escherichia coli O127:H6 (strain E2348/69 / EPEC).